Here is a 638-residue protein sequence, read N- to C-terminus: MESHGKTHQKEHDNDLSPKPITLSKYSKRVELKTLLDRSDRGAGLAGKRVVIGGWVKSARAVKKNSPPPPLPVVAAPSPSSGGDQAHTTANIRCTEIIQSKMNIFKRFFDVLSGGGKTYPIFDKTELAGQKAVPPPEYVFYFLISDGSSISSLQVVVDSALSTVPATQLMALGTCIVAEGVLRLPLAASAKHVIELEAEKLLHVGTVDPEKYPLSKKQLPLHMLRDFSHFRPRTTTVGSVTRVHSALTLASHTFLQYHGFQYVQVPVITTTTGFGEMFRVTTLLGKTDDKEEKKPPVQEKDGFSIDTVKAVIKEKTRLIDHLKRSDSNRETVVAAVHDLKKTNDLASQIEMKQKSKTGTLVKPEKLDFSKDFFGRDTYLTASGRFHLESYASALGKVYTFGPRFIADKIDNARHLAEKWNVETEMAFAELDDAMDCADEYFKFLCKYVLENRDEDMKFISKRVDKTITTRLEATASSSLLRFSYTEVISLLQKATTTKFETKPEWGVALTTEHLSYLTDEIYKGPVIVHTYPKAIKQFYVRLNDDKKTVAAFDLVVPKVGVVITGSQNEERFEILDARIGESGFTREKFEWYLDLRRHGTVKHSGISLSMEQMLLYATGLPDIKDAIPFPRSWGKANN.

Residues 1-16 are compositionally biased toward basic and acidic residues; the sequence is MESHGKTHQKEHDNDL. Disordered regions lie at residues 1-23 and 62-87; these read MESH…PITL and VKKN…DQAH.

Belongs to the class-II aminoacyl-tRNA synthetase family.

Its subcellular location is the cytoplasm. It localises to the cytosol. It catalyses the reaction tRNA(Asn) + L-asparagine + ATP = L-asparaginyl-tRNA(Asn) + AMP + diphosphate + H(+). The protein is Asparagine--tRNA ligase, cytoplasmic 2 of Arabidopsis thaliana (Mouse-ear cress).